The primary structure comprises 841 residues: Probable alpha-glucuronidase A (841 aa).

The first 20 residues, 1-20 (MRGLNLFQLILALLLSMVAA), serve as a signal peptide directing secretion. 15 N-linked (GlcNAc...) asparagine glycosylation sites follow: asparagine 51, asparagine 76, asparagine 85, asparagine 149, asparagine 222, asparagine 279, asparagine 310, asparagine 343, asparagine 450, asparagine 465, asparagine 527, asparagine 576, asparagine 682, asparagine 723, and asparagine 732.

Belongs to the glycosyl hydrolase 67 family.

The protein resides in the secreted. It catalyses the reaction an alpha-D-glucuronoside + H2O = D-glucuronate + an alcohol. Alpha-glucuronidase involved in the hydrolysis of xylan, a major structural heterogeneous polysaccharide found in plant biomass representing the second most abundant polysaccharide in the biosphere, after cellulose. Releases 4-O-methylglucuronic acid from xylan. The chain is Probable alpha-glucuronidase A (aguA) from Aspergillus niger.